A 485-amino-acid polypeptide reads, in one-letter code: MSIRYESVENLLTLIKDKKIKPSDVVKDIYDAIEETDPTIKSFLALDKENAIKKAQELDELQAKDQMDGKLFGIPMGIKDNIITNGLETTCASKMLEGFVPIYESTVMEKLHKENAVLIGKLNMDEFAMGGSTETSYFKKTVNPFDHKAVPGGSSGGSAAAVAAGLVPFSLGSDTGGSIRQPAAYCGVVGMKPTYGRVSRFGLVAFASSLDQIGPLTRNVKDNAIVLEAISGADVNDSTSAPVDDVDFTSEIGKDIKGLKVALPKEYLGEGVADDVKEAVQNAVETLKSLGAVVEEVSLPNTKFGIPSYYVIASSEASSNLSRFDGIRYGYHSKEAHSLEELYKMSRSEGFGKEVKRRIFLGTFALSSGYYDAYYKKSQKVRTLIKNDFDKVFENYDVVVGPTAPTTAFNLGEEIDDPLTMYANDLLTTPVNLAGLPGISVPCGQSNGRPIGLQFIGKPFDEKTLYRVAYQYETQYNLHDVYEKL.

Residues Lys79 and Ser154 each act as charge relay system in the active site. Residue Ser178 is the Acyl-ester intermediate of the active site.

Belongs to the amidase family. GatA subfamily. In terms of assembly, heterotrimer of A, B and C subunits.

It carries out the reaction L-glutamyl-tRNA(Gln) + L-glutamine + ATP + H2O = L-glutaminyl-tRNA(Gln) + L-glutamate + ADP + phosphate + H(+). In terms of biological role, allows the formation of correctly charged Gln-tRNA(Gln) through the transamidation of misacylated Glu-tRNA(Gln) in organisms which lack glutaminyl-tRNA synthetase. The reaction takes place in the presence of glutamine and ATP through an activated gamma-phospho-Glu-tRNA(Gln). This is Glutamyl-tRNA(Gln) amidotransferase subunit A from Staphylococcus aureus (strain MW2).